Here is a 402-residue protein sequence, read N- to C-terminus: Putative RNA-guided DNA endonuclease InsQ (402 aa).

Active-site residues include Asp-183 and Glu-267. Zn(2+) contacts are provided by Cys-334, Cys-337, Cys-353, and Cys-356. The active site involves Asp-363.

This sequence in the N-terminal section; belongs to the transposase 2 family. The protein in the C-terminal section; belongs to the transposase 35 family.

Its function is as follows. An RNA-guided dsDNA endonuclease. When guided by an RNA derived from the right-end element of its insertion sequence element (IS), cleaves DNA downstream of the transposon-associated motif (TAM). Cleaves supercoiled and linear DNA in a staggered manner 15-21 bases from the TAM yielding 5'-overhangs. Binds reRNA, an approximately 150 nucleotide base sRNA derived from the 3' end of its own gene, the right end (RE) of the insertion sequence (IS) plus sequence downstream of the IS. In terms of biological role, not required for transposition of the insertion element. The corresponding transposase in strains MG1655 and W3110 is a truncated pseudogene (yncK). The chain is Putative RNA-guided DNA endonuclease InsQ (insQ) from Escherichia coli (strain K12).